We begin with the raw amino-acid sequence, 369 residues long: 4beta-methylsterol monooxygenase (369 aa).

The 107-residue stretch at 29–135 (WYVVEIDGRL…VKAQWGLIWL (107 aa)) folds into the Rieske domain. Residues Cys-70, His-72, Cys-89, and His-92 each contribute to the [2Fe-2S] cluster site.

The cofactor is [2Fe-2S] cluster.

The enzyme catalyses a 3beta-hydroxy-4,4-dimethylsteroid + 3 NADH + 3 O2 + 2 H(+) = a 3beta-hydroxy-4alpha-methylsteroid-4beta-carboxylate + 3 NAD(+) + 4 H2O. It catalyses the reaction 4,4-dimethyl-5alpha-cholesta-8,24-dien-3beta-ol + 3 NADH + 3 O2 + 2 H(+) = 4beta-carboxy-4alpha-methyl-5alpha-cholesta-8,24-dien-3beta-ol + 3 NAD(+) + 4 H2O. The catalysed reaction is a 3beta-hydroxy-4,4-dimethylsteroid + NADH + O2 + H(+) = a 3beta-hydroxy-4beta-hydroxymethyl-4alpha-methylsteroid + NAD(+) + H2O. It carries out the reaction a 3beta-hydroxy-4beta-hydroxymethyl-4alpha-methylsteroid + NADH + O2 + H(+) = a 3beta-hydroxy-4beta-formyl-4alpha-methylsteroid + NAD(+) + 2 H2O. The enzyme catalyses a 3beta-hydroxy-4beta-formyl-4alpha-methylsteroid + NADH + O2 = a 3beta-hydroxy-4alpha-methylsteroid-4beta-carboxylate + NAD(+) + H2O. It catalyses the reaction 4,4-dimethyl-5alpha-cholesta-8,24-dien-3beta-ol + NADH + O2 + H(+) = 4beta-hydroxymethyl-4alpha-methylzymosterol + NAD(+) + H2O. The catalysed reaction is 4beta-hydroxymethyl-4alpha-methylzymosterol + NADH + O2 + H(+) = 4beta-formylmethyl-4alpha-methyl-5alpha-cholesta-8,24-dien-3beta-ol + NAD(+) + 2 H2O. It carries out the reaction 4beta-formylmethyl-4alpha-methyl-5alpha-cholesta-8,24-dien-3beta-ol + NADH + O2 = 4beta-carboxy-4alpha-methyl-5alpha-cholesta-8,24-dien-3beta-ol + NAD(+) + H2O. It functions in the pathway steroid biosynthesis; sterol biosynthesis. Participates in the biosynthesis of bacterial sterols. Together with SdmB, removes one methyl group from the C-4 position of 4,4-dimethylated steroid molecules. SdmA oxidizes the sterol 4beta-methyl group into first a hydroxyl, then an aldehyde and finally a carboxylic acid group. In Methylococcus capsulatus (strain ATCC 33009 / NCIMB 11132 / Bath), this protein is 4beta-methylsterol monooxygenase.